Reading from the N-terminus, the 874-residue chain is Envelope glycoprotein B (874 aa).

An N-terminal signal peptide occupies residues 1–25; sequence MGVGGGPRVVLCLWCVAALLCQGVA. Residues 26-727 lie on the Virion surface side of the membrane; the sequence is QEVVAETTTP…SGVISFFKNP (702 aa). 5 cysteine pairs are disulfide-bonded: C59-C523, C77-C479, C149-C214, C306-C353, and C546-C583. Residues 116–122 form an involved in fusion and/or binding to host membrane region; the sequence is IYKGWSE. Residue N171 is glycosylated (N-linked (GlcNAc...) asparagine; by host). The interval 200–208 is involved in fusion and/or binding to host membrane; it reads RNLLWSYTT. N-linked (GlcNAc...) asparagine; by host glycans are attached at residues N247, N281, N302, N323, N348, N356, N376, N409, N412, N444, N558, N610, and N624. Positions 412-450 are disordered; it reads NATASPTSTPTTSPRRRRRDTSSVSGGGNNGDNSTKEES. A hydrophobic membrane proximal region region spans residues 673 to 725; that stretch reads LDDSIDHGRDSFIQTLGDIMQDLGTIGKVVVNVASGVFSLFGSIVSGVISFFK. A helical transmembrane segment spans residues 728-748; the sequence is FGGMLLIVLIIAGVVVVYLFM. Topologically, residues 749-874 are intravirion; sequence TRSRSIYSAP…VEAGTADTGV (126 aa). A disordered region spans residues 830 to 874; that stretch reads RRGGGGYQRLQRDGSDDEGDYEPLRRQDGGYDDVDVEAGTADTGV. The short motif at 836–839 is the Internalization motif element; it reads YQRL.

It belongs to the herpesviridae glycoprotein B family. In terms of assembly, homotrimer; disulfide-linked. Binds to heparan sulfate proteoglycans. Interacts with gH/gL heterodimer. A proteolytic cleavage by host furin generates two subunits that remain linked by disulfide bonds.

It localises to the virion membrane. It is found in the host cell membrane. The protein resides in the host endosome membrane. Its subcellular location is the host Golgi apparatus membrane. In terms of biological role, envelope glycoprotein that forms spikes at the surface of virion envelope. Essential for the initial attachment to heparan sulfate moieties of the host cell surface proteoglycans. Involved in fusion of viral and cellular membranes leading to virus entry into the host cell. Following initial binding to its host receptors, membrane fusion is mediated by the fusion machinery composed at least of gB and the heterodimer gH/gL. May be involved in the fusion between the virion envelope and the outer nuclear membrane during virion egress. This is Envelope glycoprotein B from Equus caballus (Horse).